Reading from the N-terminus, the 405-residue chain is S-adenosylmethionine synthase (405 aa).

ATP is bound at residue 139–144 (GKGSAD).

The protein belongs to the AdoMet synthase 2 family. The cofactor is Mg(2+).

It carries out the reaction L-methionine + ATP + H2O = S-adenosyl-L-methionine + phosphate + diphosphate. It functions in the pathway amino-acid biosynthesis; S-adenosyl-L-methionine biosynthesis; S-adenosyl-L-methionine from L-methionine: step 1/1. Catalyzes the formation of S-adenosylmethionine from methionine and ATP. The protein is S-adenosylmethionine synthase of Sulfurisphaera tokodaii (strain DSM 16993 / JCM 10545 / NBRC 100140 / 7) (Sulfolobus tokodaii).